The following is a 287-amino-acid chain: ATP synthase gamma chain (287 aa).

It belongs to the ATPase gamma chain family. In terms of assembly, F-type ATPases have 2 components, CF(1) - the catalytic core - and CF(0) - the membrane proton channel. CF(1) has five subunits: alpha(3), beta(3), gamma(1), delta(1), epsilon(1). CF(0) has three main subunits: a, b and c.

It is found in the cell inner membrane. Its function is as follows. Produces ATP from ADP in the presence of a proton gradient across the membrane. The gamma chain is believed to be important in regulating ATPase activity and the flow of protons through the CF(0) complex. This Xanthomonas oryzae pv. oryzae (strain MAFF 311018) protein is ATP synthase gamma chain.